The chain runs to 239 residues: Tumor necrosis factor ligand superfamily member 8 (239 aa).

A disordered region spans residues 1-36 (MEPGLQQAGSCGAPSPDPAMQVQPGSVASPWRSTRP). Residues 1–43 (MEPGLQQAGSCGAPSPDPAMQVQPGSVASPWRSTRPWRSTSRS) lie on the Cytoplasmic side of the membrane. Residues 44–67 (YFYLSTTALVCLVVAVAIILVLVV) traverse the membrane as a helical; Signal-anchor for type II membrane protein segment. The Extracellular portion of the chain corresponds to 68–239 (QKKDSTPNTT…LSVFLYSSSD (172 aa)). Asn-75, Asn-86, Asn-114, Asn-158, Asn-194, and Asn-206 each carry an N-linked (GlcNAc...) asparagine glycan. A THD domain is found at 103-230 (SWAYLQVSKH…TNTFPLDNVL (128 aa)). Cys-156 and Cys-182 are joined by a disulfide.

This sequence belongs to the tumor necrosis factor family. In terms of assembly, homotrimer.

The protein localises to the membrane. In terms of biological role, cytokine that binds to TNFRSF8/CD30. Induces proliferation of T-cells. This Mus musculus (Mouse) protein is Tumor necrosis factor ligand superfamily member 8 (Tnfsf8).